Here is a 133-residue protein sequence, read N- to C-terminus: C-C motif chemokine 21a (133 aa).

A signal peptide spans Met1 to Gly23. 3 cysteine pairs are disulfide-bonded: Cys31–Cys57, Cys32–Cys75, and Cys103–Cys122. Residues Leu86 to Gly133 are disordered. Residues Lys98 to Gly133 form a C-terminal basic extension region. The span at Arg104 to Cys122 shows a compositional bias: basic residues.

The protein belongs to the intercrine beta (chemokine CC) family. In terms of assembly, binds to CCR7 and to CXCR3. Interacts with PDPN; relocalizes PDPN to the basolateral membrane. Interacts with GPR174. Expressed strongly in lung, spleen, thymus, peripheral and mesentric lymph nodes. Also expressed in the testis, kidney, liver, and heart.

It is found in the secreted. Its function is as follows. Inhibits hemopoiesis and stimulates chemotaxis. Chemotactic in vitro for thymocytes and activated T-cells, but not for B-cells, macrophages, or neutrophils. Potent mesangial cell chemoattractant. Shows preferential activity towards naive T-cells. May play a role in mediating homing of lymphocytes to secondary lymphoid organs. This chain is C-C motif chemokine 21a (Ccl21a), found in Mus musculus (Mouse).